The sequence spans 391 residues: 1-acyl-sn-glycerol-3-phosphate acyltransferase 2 (391 aa).

A helical membrane pass occupies residues Met-3–Val-23. An HXXXXD motif motif is present at residues His-92 to Asp-97. Helical transmembrane passes span Leu-306–Trp-326 and Lys-334–Ile-354. Positions Gln-358–Lys-391 are disordered.

The protein belongs to the 1-acyl-sn-glycerol-3-phosphate acyltransferase family.

The protein localises to the endoplasmic reticulum membrane. The catalysed reaction is a 1-acyl-sn-glycero-3-phosphate + an acyl-CoA = a 1,2-diacyl-sn-glycero-3-phosphate + CoA. It participates in phospholipid metabolism; CDP-diacylglycerol biosynthesis; CDP-diacylglycerol from sn-glycerol 3-phosphate: step 2/3. Functionally, converts lysophosphatidic acid (LPA) into phosphatidic acid by incorporating acyl moiety at the 2 position. The polypeptide is 1-acyl-sn-glycerol-3-phosphate acyltransferase 2 (LPAT2) (Brassica oleracea (Wild cabbage)).